The following is a 512-amino-acid chain: tRNA-2-methylthio-N(6)-dimethylallyladenosine synthase (512 aa).

In terms of domain architecture, MTTase N-terminal spans Arg23–His139. [4Fe-4S] cluster contacts are provided by Cys32, Cys68, Cys102, Cys176, Cys180, and Cys183. Positions Arg162–Glu398 constitute a Radical SAM core domain. One can recognise a TRAM domain in the interval Arg401–Ile469. The disordered stretch occupies residues Ala477–Cys512.

The protein belongs to the methylthiotransferase family. MiaB subfamily. As to quaternary structure, monomer. It depends on [4Fe-4S] cluster as a cofactor.

The protein resides in the cytoplasm. The catalysed reaction is N(6)-dimethylallyladenosine(37) in tRNA + (sulfur carrier)-SH + AH2 + 2 S-adenosyl-L-methionine = 2-methylsulfanyl-N(6)-dimethylallyladenosine(37) in tRNA + (sulfur carrier)-H + 5'-deoxyadenosine + L-methionine + A + S-adenosyl-L-homocysteine + 2 H(+). Its function is as follows. Catalyzes the methylthiolation of N6-(dimethylallyl)adenosine (i(6)A), leading to the formation of 2-methylthio-N6-(dimethylallyl)adenosine (ms(2)i(6)A) at position 37 in tRNAs that read codons beginning with uridine. The protein is tRNA-2-methylthio-N(6)-dimethylallyladenosine synthase of Mycolicibacterium smegmatis (strain ATCC 700084 / mc(2)155) (Mycobacterium smegmatis).